The chain runs to 36 residues: MSASYLPSILVPLVGLVFPAITMVSLFLYIEQDEIV.

Residues 9–29 (ILVPLVGLVFPAITMVSLFLY) form a helical membrane-spanning segment.

The protein belongs to the PsaI family.

It localises to the plastid. It is found in the chloroplast thylakoid membrane. May help in the organization of the PsaL subunit. In Zygnema circumcarinatum (Green alga), this protein is Photosystem I reaction center subunit VIII.